The following is a 283-amino-acid chain: Polyamine aminopropyltransferase (283 aa).

The 237-residue stretch at 5-241 (NNWYIEHFER…GWWSVTLARK (237 aa)) folds into the PABS domain. S-methyl-5'-thioadenosine is bound at residue Gln-35. Spermidine-binding residues include His-66 and Asp-90. S-methyl-5'-thioadenosine-binding positions include Asp-110 and 141–142 (DG). Catalysis depends on Asp-160, which acts as the Proton acceptor. 160-163 (DSTD) lines the spermidine pocket. Pro-167 is an S-methyl-5'-thioadenosine binding site.

The protein belongs to the spermidine/spermine synthase family. As to quaternary structure, homodimer or homotetramer.

It is found in the cytoplasm. The catalysed reaction is S-adenosyl 3-(methylsulfanyl)propylamine + putrescine = S-methyl-5'-thioadenosine + spermidine + H(+). The protein operates within amine and polyamine biosynthesis; spermidine biosynthesis; spermidine from putrescine: step 1/1. Its function is as follows. Catalyzes the irreversible transfer of a propylamine group from the amino donor S-adenosylmethioninamine (decarboxy-AdoMet) to putrescine (1,4-diaminobutane) to yield spermidine. This chain is Polyamine aminopropyltransferase, found in Stenotrophomonas maltophilia (strain R551-3).